A 185-amino-acid polypeptide reads, in one-letter code: Putative manganese efflux pump MntP (185 aa).

Helical transmembrane passes span 8 to 28 (LFVI…SIGL), 42 to 62 (ISFG…GVLF), 66 to 86 (ILVI…ILML), 103 to 123 (MYFI…FTVL), 137 to 157 (IFIG…SGYL), and 165 to 185 (KYAN…MIFM).

Belongs to the MntP (TC 9.B.29) family.

The protein resides in the cell membrane. In terms of biological role, probably functions as a manganese efflux pump. In Clostridium novyi (strain NT), this protein is Putative manganese efflux pump MntP.